Here is a 946-residue protein sequence, read N- to C-terminus: Rho GTPase-activating protein 4 (946 aa).

The F-BAR domain maps to 19-317 (TQVKEMRWQL…AVEALDPPGD (299 aa)). Residues 128–195 (LAQRLSHIAE…REAERQEEKR (68 aa)) adopt a coiled-coil conformation. Positions 187-196 (EAERQEEKRA) are enriched in basic and acidic residues. 2 disordered regions span residues 187–220 (EAER…SLKK) and 402–435 (LDSF…QQQE). Composition is skewed to low complexity over residues 202–211 (TTTAGATEAG) and 407–419 (TSPS…STSS). One can recognise a Rho-GAP domain in the interval 507-695 (GDMEKFIQSS…TLIVQPDRVF (189 aa)). The SH3 domain maps to 746–805 (EGVVEAVACFAYTGRTAQELSFRRGDVLRLHERASSDWWRGEHNGMRGLIPHKYITLPAG). 3 positions are modified to phosphoserine: serine 860, serine 901, and serine 906. Positions 885 to 946 (KTSVRQGLGP…QGLDTTPKPH (62 aa)) are disordered. Residues 901–910 (SPGPRSPKAP) show a composition bias toward pro residues. A compositionally biased stretch (low complexity) spans 924–934 (GPGAPASPSAS).

Interacts with NCKAP1L. In terms of tissue distribution, predominantly in hematopoietic cells (spleen, thymus and leukocytes); low levels in placenta, lung and various fetal tissues.

It localises to the cytoplasm. Functionally, inhibitory effect on stress fiber organization. May down-regulate Rho-like GTPase in hematopoietic cells. This is Rho GTPase-activating protein 4 from Homo sapiens (Human).